We begin with the raw amino-acid sequence, 110 residues long: Mobility group protein 1B (110 aa).

A DNA-binding region (HMG box) is located at residues Pro-5–Glu-71. Residues Glu-71–Gly-81 are compositionally biased toward basic and acidic residues. The interval Glu-71–Glu-110 is disordered. Residues Lys-82 to Gly-100 show a composition bias toward basic residues.

The protein belongs to the HMGB family.

Its subcellular location is the nucleus. The protein resides in the chromosome. Its function is as follows. Found in condensed chromomeres. Binds preferentially to AT-rich DNA. The protein is Mobility group protein 1B (HMG1B) of Chironomus tentans (Midge).